We begin with the raw amino-acid sequence, 804 residues long: Leucine--tRNA ligase (804 aa).

Residues 39–50 carry the 'HIGH' region motif; it reads PFPSGKGLHVGH. The 'KMSKS' region signature appears at 573–577; sequence KMSKS. Lys576 is an ATP binding site.

This sequence belongs to the class-I aminoacyl-tRNA synthetase family.

Its subcellular location is the cytoplasm. The enzyme catalyses tRNA(Leu) + L-leucine + ATP = L-leucyl-tRNA(Leu) + AMP + diphosphate. This chain is Leucine--tRNA ligase, found in Lactobacillus helveticus (strain DPC 4571).